Consider the following 67-residue polypeptide: Small ribosomal subunit protein bS21 (67 aa).

The protein belongs to the bacterial ribosomal protein bS21 family.

The chain is Small ribosomal subunit protein bS21 from Nitratidesulfovibrio vulgaris (strain DP4) (Desulfovibrio vulgaris).